We begin with the raw amino-acid sequence, 306 residues long: MWFKNLLIYRLTQDLPVDAEALETALATKLARPCASQELTTYGFVAPFGKGEDAPLVHVSGDFLLISARKEERILPGSVVRDAVKEKVEEIEAEQMRKVYKKERDQIKDEIIQAFLPRAFIRRSSTFAAIAPKQGLILVNSASPKRAEDLLSTLREVIGTLPVRPLTVKTAPTAVMTEWVTTQQAAPDFFVLDECELRDTHEDGGIVRCKRQDLTSEEIQLHLSTGKVVTQLSLAWQDKLSFMLDDKMTVKRLKFEDLLQDQAEQDGGDEALGQLDASFTLMMLTFGDFLPALVEALGGEETPQGI.

Belongs to the RdgC family.

The protein resides in the cytoplasm. The protein localises to the nucleoid. Its function is as follows. May be involved in recombination. The polypeptide is Recombination-associated protein RdgC (Pseudomonas fluorescens (strain Pf0-1)).